The following is a 610-amino-acid chain: UvrABC system protein C (610 aa).

The GIY-YIG domain occupies 16–94 (SQPGVYRMYD…IKLYQPRYNV (79 aa)). A UVR domain is found at 204 to 239 (QQVLTQLITRMEEASQQLHFEDAARIRDQIQAVRRV).

It belongs to the UvrC family. Interacts with UvrB in an incision complex.

The protein localises to the cytoplasm. In terms of biological role, the UvrABC repair system catalyzes the recognition and processing of DNA lesions. UvrC both incises the 5' and 3' sides of the lesion. The N-terminal half is responsible for the 3' incision and the C-terminal half is responsible for the 5' incision. This Yersinia pseudotuberculosis serotype I (strain IP32953) protein is UvrABC system protein C.